A 444-amino-acid chain; its full sequence is Ribulose bisphosphate carboxylase large chain (444 aa).

Lysine 5 is modified (N6,N6,N6-trimethyllysine). Residues asparagine 114 and threonine 164 each coordinate substrate. Residue lysine 166 is the Proton acceptor of the active site. Lysine 168 is a substrate binding site. Positions 192, 194, and 195 each coordinate Mg(2+). Position 192 is an N6-carboxylysine (lysine 192). The Proton acceptor role is filled by histidine 285. 3 residues coordinate substrate: arginine 286, histidine 318, and serine 370.

Belongs to the RuBisCO large chain family. Type I subfamily. As to quaternary structure, heterohexadecamer of 8 large chains and 8 small chains; disulfide-linked. The disulfide link is formed within the large subunit homodimers. It depends on Mg(2+) as a cofactor. Post-translationally, the disulfide bond which can form in the large chain dimeric partners within the hexadecamer appears to be associated with oxidative stress and protein turnover.

It localises to the plastid. Its subcellular location is the chloroplast. It carries out the reaction 2 (2R)-3-phosphoglycerate + 2 H(+) = D-ribulose 1,5-bisphosphate + CO2 + H2O. The enzyme catalyses D-ribulose 1,5-bisphosphate + O2 = 2-phosphoglycolate + (2R)-3-phosphoglycerate + 2 H(+). Functionally, ruBisCO catalyzes two reactions: the carboxylation of D-ribulose 1,5-bisphosphate, the primary event in carbon dioxide fixation, as well as the oxidative fragmentation of the pentose substrate in the photorespiration process. Both reactions occur simultaneously and in competition at the same active site. This chain is Ribulose bisphosphate carboxylase large chain, found in Ginkgo biloba (Ginkgo).